The chain runs to 214 residues: MEGRRLSQLDRVIINFDDALRTVFGQPRTTERASPASGIAEGALSEKERRLSGCLMRVNHAGEVAAQALYQGQALTARLTEIRKAMENAAREENEHLVWCQQRVQELGAHTSYLGPFWYGGSFVIGALAGMAGDKWSLGFVAETEHQVVKHIERHLDRISAQDAPSRAILEQMKEDEARHATVALEAGGVELPSSIKALMGAASKVMTRTAYWI.

6 residues coordinate Fe cation: Glu-63, Glu-93, His-96, Glu-145, Glu-177, and His-180.

This sequence belongs to the COQ7 family. The cofactor is Fe cation.

The protein localises to the cell membrane. The enzyme catalyses a 5-methoxy-2-methyl-3-(all-trans-polyprenyl)benzene-1,4-diol + AH2 + O2 = a 3-demethylubiquinol + A + H2O. Its pathway is cofactor biosynthesis; ubiquinone biosynthesis. Functionally, catalyzes the hydroxylation of 2-nonaprenyl-3-methyl-6-methoxy-1,4-benzoquinol during ubiquinone biosynthesis. The protein is 3-demethoxyubiquinol 3-hydroxylase of Nitrosococcus oceani (strain ATCC 19707 / BCRC 17464 / JCM 30415 / NCIMB 11848 / C-107).